The sequence spans 1349 residues: Indole-3-acetaldehyde oxidase (1349 aa).

The region spanning 7-94 (AAVVLAVNGK…RCSVTTSEGI (88 aa)) is the 2Fe-2S ferredoxin-type domain. The [2Fe-2S] cluster site is built by C46, C51, and C54. The 179-residue stretch at 237 to 415 (VPVSDDGWYR…LSIFIPEWGS (179 aa)) folds into the FAD-binding PCMH-type domain.

This sequence belongs to the xanthine dehydrogenase family. In terms of assembly, aldehyde oxidases (AO) are homodimers and heterodimers of AO subunits. It depends on [2Fe-2S] cluster as a cofactor. The cofactor is FAD. Mo-molybdopterin is required as a cofactor. In terms of tissue distribution, mostly expressed in coleoptiles, and, to a lower extent, in mesocotyl and roots.

It is found in the cytoplasm. It catalyses the reaction indole-3-acetaldehyde + O2 + H2O = (indol-3-yl)acetate + H2O2 + H(+). In terms of biological role, in higher plants aldehyde oxidases (AO) appear to be homo- and heterodimeric assemblies of AO subunits with probably different physiological functions. Involved in the biosynthesis of auxin. This is Indole-3-acetaldehyde oxidase (AO2) from Zea mays (Maize).